The sequence spans 353 residues: D-alanine--D-alanine ligase (353 aa).

An ATP-grasp domain is found at K141–H349. ATP is bound at residue E176–E231. Mg(2+) contacts are provided by D302, E316, and N318.

It belongs to the D-alanine--D-alanine ligase family. Requires Mg(2+) as cofactor. Mn(2+) is required as a cofactor.

The protein resides in the cytoplasm. It catalyses the reaction 2 D-alanine + ATP = D-alanyl-D-alanine + ADP + phosphate + H(+). Its pathway is cell wall biogenesis; peptidoglycan biosynthesis. Functionally, cell wall formation. In Synechococcus sp. (strain CC9311), this protein is D-alanine--D-alanine ligase.